A 280-amino-acid chain; its full sequence is Myb family transcription factor PHL11 (280 aa).

The HTH myb-type domain occupies 20-80 (RDPKPRLRWT…HLQKYRLGQQ (61 aa)). A DNA-binding region (H-T-H motif) is located at residues 51-76 (PKSVLKLMGLKGLTLYHLKSHLQKYR). Residues 77–98 (LGQQQGKKQNRTEQNKENAGSS) form a disordered region. Positions 129 to 149 (AEAMRHQVDAQQRFQEQLEVQ) are coiled coil. Residues 142-147 (FQEQLE) carry the LHEQLE motif.

Belongs to the MYB-CC family.

Its subcellular location is the nucleus. The chain is Myb family transcription factor PHL11 from Arabidopsis thaliana (Mouse-ear cress).